We begin with the raw amino-acid sequence, 188 residues long: UPF0314 protein Sala_3154 (188 aa).

3 consecutive transmembrane segments (helical) span residues 8–28 (TGWL…IFMG), 57–77 (WYSF…RWIM), and 143–163 (MRWW…LWTI).

This sequence belongs to the UPF0314 family.

It localises to the cell membrane. The chain is UPF0314 protein Sala_3154 from Sphingopyxis alaskensis (strain DSM 13593 / LMG 18877 / RB2256) (Sphingomonas alaskensis).